The primary structure comprises 631 residues: Phosphomethylpyrimidine synthase (631 aa).

Residues N239, M268, Y297, H333, 353–355 (SRG), 394–397 (DGLR), and E433 contribute to the substrate site. Position 437 (H437) interacts with Zn(2+). Position 460 (Y460) interacts with substrate. Position 501 (H501) interacts with Zn(2+). [4Fe-4S] cluster contacts are provided by C581, C584, and C589.

Belongs to the ThiC family. Homodimer. Requires [4Fe-4S] cluster as cofactor.

It carries out the reaction 5-amino-1-(5-phospho-beta-D-ribosyl)imidazole + S-adenosyl-L-methionine = 4-amino-2-methyl-5-(phosphooxymethyl)pyrimidine + CO + 5'-deoxyadenosine + formate + L-methionine + 3 H(+). The protein operates within cofactor biosynthesis; thiamine diphosphate biosynthesis. Functionally, catalyzes the synthesis of the hydroxymethylpyrimidine phosphate (HMP-P) moiety of thiamine from aminoimidazole ribotide (AIR) in a radical S-adenosyl-L-methionine (SAM)-dependent reaction. The polypeptide is Phosphomethylpyrimidine synthase (Salmonella typhi).